We begin with the raw amino-acid sequence, 219 residues long: Cytidylate kinase (219 aa).

An ATP-binding site is contributed by 21–29 (GPAASGKGT).

Belongs to the cytidylate kinase family. Type 1 subfamily.

It is found in the cytoplasm. The enzyme catalyses CMP + ATP = CDP + ADP. It catalyses the reaction dCMP + ATP = dCDP + ADP. This is Cytidylate kinase from Rickettsia felis (strain ATCC VR-1525 / URRWXCal2) (Rickettsia azadi).